A 367-amino-acid polypeptide reads, in one-letter code: 2-aminoethylphosphonate--pyruvate transaminase (367 aa).

Lysine 193 is subject to N6-(pyridoxal phosphate)lysine.

This sequence belongs to the class-V pyridoxal-phosphate-dependent aminotransferase family. PhnW subfamily. In terms of assembly, homodimer. The cofactor is pyridoxal 5'-phosphate.

The enzyme catalyses (2-aminoethyl)phosphonate + pyruvate = phosphonoacetaldehyde + L-alanine. Involved in phosphonate degradation. The chain is 2-aminoethylphosphonate--pyruvate transaminase from Vibrio vulnificus (strain YJ016).